The primary structure comprises 99 residues: Large ribosomal subunit protein uL23 (99 aa).

It belongs to the universal ribosomal protein uL23 family. As to quaternary structure, part of the 50S ribosomal subunit. Contacts protein L29, and trigger factor when it is bound to the ribosome.

One of the early assembly proteins it binds 23S rRNA. One of the proteins that surrounds the polypeptide exit tunnel on the outside of the ribosome. Forms the main docking site for trigger factor binding to the ribosome. The polypeptide is Large ribosomal subunit protein uL23 (Xanthomonas axonopodis pv. citri (strain 306)).